Reading from the N-terminus, the 328-residue chain is DNA-directed RNA polymerase subunit alpha (328 aa).

Positions 1–235 are alpha N-terminal domain (alpha-NTD); sequence MQGSVTEFLK…EQLDAFVDLR (235 aa). The interval 249 to 328 is alpha C-terminal domain (alpha-CTD); sequence FDPILLRPVD…ENWPPASLAE (80 aa).

Belongs to the RNA polymerase alpha chain family. In terms of assembly, homodimer. The RNAP catalytic core consists of 2 alpha, 1 beta, 1 beta' and 1 omega subunit. When a sigma factor is associated with the core the holoenzyme is formed, which can initiate transcription.

It catalyses the reaction RNA(n) + a ribonucleoside 5'-triphosphate = RNA(n+1) + diphosphate. Functionally, DNA-dependent RNA polymerase catalyzes the transcription of DNA into RNA using the four ribonucleoside triphosphates as substrates. The chain is DNA-directed RNA polymerase subunit alpha from Pseudoalteromonas translucida (strain TAC 125).